Consider the following 500-residue polypeptide: Glycerol kinase (500 aa).

Threonine 15 serves as a coordination point for ADP. Threonine 15, threonine 16, and serine 17 together coordinate ATP. Threonine 15 contributes to the sn-glycerol 3-phosphate binding site. Arginine 19 lines the ADP pocket. Arginine 85, glutamate 86, tyrosine 137, and aspartate 245 together coordinate sn-glycerol 3-phosphate. Glycerol-binding residues include arginine 85, glutamate 86, tyrosine 137, aspartate 245, and glutamine 246. Residues threonine 267 and glycine 310 each contribute to the ADP site. Threonine 267, glycine 310, glutamine 314, and glycine 411 together coordinate ATP. ADP is bound by residues glycine 411 and asparagine 415.

Belongs to the FGGY kinase family.

It catalyses the reaction glycerol + ATP = sn-glycerol 3-phosphate + ADP + H(+). It participates in polyol metabolism; glycerol degradation via glycerol kinase pathway; sn-glycerol 3-phosphate from glycerol: step 1/1. Inhibited by fructose 1,6-bisphosphate (FBP). Functionally, key enzyme in the regulation of glycerol uptake and metabolism. Catalyzes the phosphorylation of glycerol to yield sn-glycerol 3-phosphate. This is Glycerol kinase from Aeromonas hydrophila subsp. hydrophila (strain ATCC 7966 / DSM 30187 / BCRC 13018 / CCUG 14551 / JCM 1027 / KCTC 2358 / NCIMB 9240 / NCTC 8049).